A 317-amino-acid polypeptide reads, in one-letter code: MPREDRATWKSNYFLKIIQLLNDYPKCFIVGADNVGSKQMQTIRLSLRGKAIVLMGKNTMMRKAIRGHLENNPALEKLLPHIRGNVGFVFTKEDLPEVRDMLLANKVPAAARAGAIAPCEVTVPAQNTGLGPEKTSFFQALGITTKISRGTIEILSDVQLIRPGDKVGASEATLLNMLNISPFSYGLIIQQVYDNGSVYSPEVLDITEDALHKRFLEGVRNIASVCLQIGYPTLASIPHSIINGYKRVLRVAVETDYSFPMADKVKAFLADPSRFAVAAAPSVAAAPAAVRLVPLLSRPRRSPRSLMRTWLRPVRLK.

This sequence belongs to the universal ribosomal protein uL10 family. P0 forms a pentameric complex by interaction with dimers of P1 and P2. Phosphorylated.

In terms of biological role, ribosomal protein P0 is the functional equivalent of E.coli protein L10. The protein is Large ribosomal subunit protein uL10 (rplp0) of Ictalurus punctatus (Channel catfish).